A 262-amino-acid chain; its full sequence is Polyamine aminopropyltransferase (262 aa).

Residues 1 to 249 (MWITQEITPY…DIHRAAFALP (249 aa)) form the PABS domain. Asn29 serves as a coordination point for S-methyl-5'-thioadenosine. Spermidine is bound at residue Asp83. Asp155 acts as the Proton acceptor in catalysis.

In terms of assembly, homodimer.

Its subcellular location is the cytoplasm. It catalyses the reaction S-adenosyl 3-(methylsulfanyl)propylamine + putrescine = S-methyl-5'-thioadenosine + spermidine + H(+). The protein operates within amine and polyamine biosynthesis; spermidine biosynthesis; spermidine from putrescine: step 1/1. With respect to regulation, inhibited by methylglyoxal bis(cyclopentylamidinohydrazone)(MGBCP). In terms of biological role, involved in the cell growth and proliferation. Catalyzes the irreversible transfer of a propylamine group from the amino donor S-adenosylmethioninamine (decarboxy-AdoMet) to putrescine (1,4-diaminobutane) to yield spermidine. Spermidine cannot be used as an aminopropyl acceptor. The protein is Polyamine aminopropyltransferase of Helicobacter pylori (strain ATCC 700392 / 26695) (Campylobacter pylori).